The sequence spans 239 residues: Ribosomal RNA small subunit methyltransferase G (239 aa).

S-adenosyl-L-methionine-binding positions include glycine 77, phenylalanine 82, 128–129 (AE), and arginine 146. The tract at residues 215–239 (DKKRQTPKKYPRKPGTPNKTPLLEK) is disordered.

It belongs to the methyltransferase superfamily. RNA methyltransferase RsmG family.

The protein resides in the cytoplasm. Its function is as follows. Specifically methylates the N7 position of guanine in position 535 of 16S rRNA. The polypeptide is Ribosomal RNA small subunit methyltransferase G (Staphylococcus aureus (strain USA300)).